The primary structure comprises 977 residues: uncharacterized protein (977 aa).

Positions 1–24 are cleaved as a signal peptide; it reads MQSNLLKVLGVLAIVATLVCFIFA. Residues 125-146 form a disordered region; that stretch reads TESTRPGKSNLDDKGNMIPIPR. A run of 6 helical transmembrane segments spans residues 612–632, 722–742, 754–774, 796–816, 833–853, and 866–886; these read IKAILILYVMTYGAMFLLGFA, LGLSGIIYFIITFIAVGIVII, AFMATCILIGIAPLFISFLLF, VVMMAGIIVLTQLFTIYLDFV, FIGTILPIALLNVPIFCINWF, and GVNMQNIVALVIIAYGMYGYV. The tract at residues 918–977 is disordered; the sequence is KALSPIGMDDKTRQGITGRAEARLKQRNKTLDQAEKNRKNTPKEGGEKTNAEPPQPEARG. A compositionally biased stretch (basic and acidic residues) spans 937–967; the sequence is AEARLKQRNKTLDQAEKNRKNTPKEGGEKTN.

The protein belongs to the TrbL/VirB6 family.

The protein localises to the cell membrane. This is an uncharacterized protein from Rickettsia felis (strain ATCC VR-1525 / URRWXCal2) (Rickettsia azadi).